The primary structure comprises 452 residues: UPF0210 protein Daud_1353 (452 aa).

The protein belongs to the UPF0210 family. Homodimer.

The polypeptide is UPF0210 protein Daud_1353 (Desulforudis audaxviator (strain MP104C)).